Consider the following 1198-residue polypeptide: Sterol 3-beta-glucosyltransferase (1198 aa).

The segment covering 1-11 has biased composition (polar residues); the sequence is MPITQIISASD. Disordered regions lie at residues 1–89 and 124–162; these read MPIT…DNAD and SQVDSEESDSSDSFQENIGQNEVKSKKENLKTKSHPEVP. A compositionally biased stretch (basic residues) spans 35-51; the sequence is RHHRLSRSLSKFKRWRG. Residues 52–67 show a composition bias toward low complexity; that stretch reads RSNSSLSMGSSEQQEL. Residue serine 76 is modified to Phosphoserine. Residues 146–162 show a composition bias toward basic and acidic residues; it reads VKSKKENLKTKSHPEVP. The GRAM 1 domain occupies 187-236; that stretch reads AKLRQRFCLDEQEPFLNDFPAWLLKDVLVQGHIFITTKHFLFFAYLPKNP. A PH domain is found at 238-336; the sequence is SVKMSGNLNI…WVNALKKEQF (99 aa). Residues 427–465 are disordered; it reads KSSFGKETPATAEQKNNGEDSKYLNVPTSAVPSSENGKK. Polar residues predominate over residues 452 to 461; the sequence is VPTSAVPSSE. Positions 570–636 constitute a GRAM 2 domain; it reads ERFRYHFKFN…VDVETCYKEK (67 aa). Serine 693 is modified (phosphoserine). Residues serine 749, arginine 750, aspartate 752, asparagine 1025, asparagine 1053, valine 1054, histidine 1056, histidine 1069, serine 1072, glycine 1073, threonine 1074, aspartate 1093, and glutamine 1094 each coordinate UDP-alpha-D-glucose.

It belongs to the glycosyltransferase 28 family.

The protein localises to the cytoplasm. The protein resides in the membrane. The catalysed reaction is a sterol + UDP-alpha-D-glucose = a sterol 3-beta-D-glucoside + UDP + H(+). It carries out the reaction ergosterol + UDP-alpha-D-glucose = ergosteryl 3-beta-D-glucoside + UDP + H(+). Functionally, sterol glycosyltransferase responsible for the glycosylation of ergosterol to form ergosterol-glucoside. Also shows activity in vitro on other sterols such as cholesterol, beta-sitosterol, stigmasterol and tomatidine. In contrasts to what is observed in Pichia pastoris and Aspergillus oryzae, is not involved in cytoplasm to vacuole transport (Cvt), pexophagy or nonselective autophagy in Saccharomyces cerevisiae. The protein is Sterol 3-beta-glucosyltransferase of Saccharomyces cerevisiae (strain YJM789) (Baker's yeast).